The primary structure comprises 311 residues: Methionyl-tRNA formyltransferase (311 aa).

Position 109–112 (109–112 (SLLP)) interacts with (6S)-5,6,7,8-tetrahydrofolate.

Belongs to the Fmt family.

The enzyme catalyses L-methionyl-tRNA(fMet) + (6R)-10-formyltetrahydrofolate = N-formyl-L-methionyl-tRNA(fMet) + (6S)-5,6,7,8-tetrahydrofolate + H(+). In terms of biological role, attaches a formyl group to the free amino group of methionyl-tRNA(fMet). The formyl group appears to play a dual role in the initiator identity of N-formylmethionyl-tRNA by promoting its recognition by IF2 and preventing the misappropriation of this tRNA by the elongation apparatus. This is Methionyl-tRNA formyltransferase from Kosmotoga olearia (strain ATCC BAA-1733 / DSM 21960 / TBF 19.5.1).